The sequence spans 143 residues: Large-conductance mechanosensitive channel (143 aa).

Transmembrane regions (helical) follow at residues 10–30 (FAVKGNVMDLAVGVIIGGAFS) and 89–109 (GSFITVAINFVILAFIIFLMV).

The protein belongs to the MscL family. As to quaternary structure, homopentamer.

It localises to the cell inner membrane. Its function is as follows. Channel that opens in response to stretch forces in the membrane lipid bilayer. May participate in the regulation of osmotic pressure changes within the cell. The polypeptide is Large-conductance mechanosensitive channel (Burkholderia cenocepacia (strain ATCC BAA-245 / DSM 16553 / LMG 16656 / NCTC 13227 / J2315 / CF5610) (Burkholderia cepacia (strain J2315))).